The following is a 479-amino-acid chain: ATP synthase subunit beta (479 aa).

158–165 (GGAGLGKT) provides a ligand contact to ATP.

Belongs to the ATPase alpha/beta chains family. F-type ATPases have 2 components, CF(1) - the catalytic core - and CF(0) - the membrane proton channel. CF(1) has five subunits: alpha(3), beta(3), gamma(1), delta(1), epsilon(1). CF(0) has three main subunits: a(1), b(2) and c(9-12). The alpha and beta chains form an alternating ring which encloses part of the gamma chain. CF(1) is attached to CF(0) by a central stalk formed by the gamma and epsilon chains, while a peripheral stalk is formed by the delta and b chains.

The protein resides in the cell inner membrane. It catalyses the reaction ATP + H2O + 4 H(+)(in) = ADP + phosphate + 5 H(+)(out). Its function is as follows. Produces ATP from ADP in the presence of a proton gradient across the membrane. The catalytic sites are hosted primarily by the beta subunits. The polypeptide is ATP synthase subunit beta (Rhodopirellula baltica (strain DSM 10527 / NCIMB 13988 / SH1)).